The following is a 285-amino-acid chain: Homeobox protein vex1 (285 aa).

Disordered stretches follow at residues K30–V54 and N69–E88. The segment covering N69–L80 has biased composition (basic and acidic residues). The segment at residues A131 to T190 is a DNA-binding region (homeobox).

Widely expressed in the embryo prior to gastrulation. Becomes restricted to the ventral marginal zone by mid/late gastrulation. Ventral localization persists during gastrulation and neurulation in the ventral region of the closed blastopore and in the proctodeum during tail bud stages.

The protein resides in the nucleus. Functionally, transcriptional repressor. Acts in a ventral signaling pathway downstream of bmp4 to antagonize the Spemann organizer and ventrally pattern the embryonic mesoderm. Represses transcription of the dorsal genes gsc and otx2. The protein is Homeobox protein vex1 of Xenopus laevis (African clawed frog).